Consider the following 196-residue polypeptide: Protein GrpE (196 aa).

A disordered region spans residues 1–39 (MSSKEQKTPEGQAPEEIIMDQHEEIEAVEPEASAEQVDP).

The protein belongs to the GrpE family. Homodimer.

Its subcellular location is the cytoplasm. In terms of biological role, participates actively in the response to hyperosmotic and heat shock by preventing the aggregation of stress-denatured proteins, in association with DnaK and GrpE. It is the nucleotide exchange factor for DnaK and may function as a thermosensor. Unfolded proteins bind initially to DnaJ; upon interaction with the DnaJ-bound protein, DnaK hydrolyzes its bound ATP, resulting in the formation of a stable complex. GrpE releases ADP from DnaK; ATP binding to DnaK triggers the release of the substrate protein, thus completing the reaction cycle. Several rounds of ATP-dependent interactions between DnaJ, DnaK and GrpE are required for fully efficient folding. This is Protein GrpE from Escherichia coli (strain SMS-3-5 / SECEC).